The following is a 365-amino-acid chain: Histidinol-phosphate aminotransferase 2 (365 aa).

The residue at position 226 (lysine 226) is an N6-(pyridoxal phosphate)lysine.

It belongs to the class-II pyridoxal-phosphate-dependent aminotransferase family. Histidinol-phosphate aminotransferase subfamily. As to quaternary structure, homodimer. Pyridoxal 5'-phosphate is required as a cofactor.

It catalyses the reaction L-histidinol phosphate + 2-oxoglutarate = 3-(imidazol-4-yl)-2-oxopropyl phosphate + L-glutamate. It participates in amino-acid biosynthesis; L-histidine biosynthesis; L-histidine from 5-phospho-alpha-D-ribose 1-diphosphate: step 7/9. In Pasteurella multocida (strain Pm70), this protein is Histidinol-phosphate aminotransferase 2 (hisC2).